The chain runs to 91 residues: C-C motif chemokine 5 (91 aa).

The first 23 residues, 1–23 (MKVSAARLAVILVATALCAPASA), serve as a signal peptide directing secretion. 2 disulfide bridges follow: C33–C57 and C34–C73.

Belongs to the intercrine beta (chemokine CC) family.

The protein localises to the secreted. Functionally, chemoattractant for blood monocytes, memory T-helper cells and eosinophils. Causes the release of histamine from basophils and activates eosinophils. May activate several chemokine receptors including CCR1, CCR3, CCR4 and CCR5. May also be an agonist of the G protein-coupled receptor GPR75. Together with GPR75, may play a role in neuron survival through activation of a downstream signaling pathway involving the PI3, Akt and MAP kinases. By activating GPR75 may also play a role in insulin secretion by islet cells. This Macaca mulatta (Rhesus macaque) protein is C-C motif chemokine 5 (CCL5).